A 357-amino-acid polypeptide reads, in one-letter code: 4-hydroxy-3-methylbut-2-en-1-yl diphosphate synthase (flavodoxin) (357 aa).

[4Fe-4S] cluster is bound by residues Cys264, Cys267, Cys299, and Glu306.

Belongs to the IspG family. It depends on [4Fe-4S] cluster as a cofactor.

It carries out the reaction (2E)-4-hydroxy-3-methylbut-2-enyl diphosphate + oxidized [flavodoxin] + H2O + 2 H(+) = 2-C-methyl-D-erythritol 2,4-cyclic diphosphate + reduced [flavodoxin]. The protein operates within isoprenoid biosynthesis; isopentenyl diphosphate biosynthesis via DXP pathway; isopentenyl diphosphate from 1-deoxy-D-xylulose 5-phosphate: step 5/6. Converts 2C-methyl-D-erythritol 2,4-cyclodiphosphate (ME-2,4cPP) into 1-hydroxy-2-methyl-2-(E)-butenyl 4-diphosphate. In Campylobacter jejuni subsp. jejuni serotype O:6 (strain 81116 / NCTC 11828), this protein is 4-hydroxy-3-methylbut-2-en-1-yl diphosphate synthase (flavodoxin).